We begin with the raw amino-acid sequence, 275 residues long: Probable ABC transporter permease protein NosY (275 aa).

The next 6 membrane-spanning stretches (helical) occupy residues 20–40 (WLLA…WFGA), 60–80 (SLAT…AIVG), 111–131 (ILAL…LALV), 146–166 (FMGS…ALSS), 179–199 (LGLW…ILVL), and 250–270 (ALWL…HGLF).

The complex may be composed of an ATP-binding protein (NosF), a transmembrane protein (NosY) and a solute-binding protein (NosD).

The protein resides in the cell inner membrane. Required for the assembly of the copper chromophores of nitrous oxide reductase. Could be part of the ABC transporter complex NosDFY. The polypeptide is Probable ABC transporter permease protein NosY (nosY) (Pseudomonas aeruginosa (strain ATCC 15692 / DSM 22644 / CIP 104116 / JCM 14847 / LMG 12228 / 1C / PRS 101 / PAO1)).